A 135-amino-acid chain; its full sequence is Allatotropins (135 aa).

The signal sequence occupies residues 1-22; the sequence is MNFSMHLVLAVAAAACLCVVTA. Phe-51 is modified (phenylalanine amide). The propeptide occupies 55 to 135; that stretch reads DRPHTRAELY…SSEELLRNVA (81 aa).

As to expression, allatotropin: Expressed in corpora cardiaca (CC), corpora allata (CA), antennal lobe (AL) and gnathal ganglion (GNG) (protein level). Expression in AL detected in all animals, expression in GNG detected in most animals and expression in CA and CC detected in few animals (at protein level). Allatotropin-PP-1: Expressed in corpora cardiaca (CC), corpora allata (CA), antennal lobe (AL) and gnathal ganglion (GNG) (at protein level). Expression in AL detected in all animals and expression in GNG, CA and CC detected in some animals (at protein level).

Its subcellular location is the secreted. Its function is as follows. Neuropeptide stimulator of juvenile hormone synthesis. This is Allatotropins from Agrotis ipsilon (Black cutworm moth).